Here is a 229-residue protein sequence, read N- to C-terminus: MKKIVIAIDGHSSSGKSTMAKDLAKEIGYTYIDTGAMYRAVTLYCIQHGFFEGEKIKEEELKASIHDIDISFRLNAETGRPDTYLNGVNVEKEIRGMEVADKVSPVATLGFVRRALVAKQQEMGKAKGIVMDGRDIGTVVFPDAELKLFVTASPEVRAKRRVDELEAKGIPASYEEVLENVKKRDYIDSTREESPLRQADDALVLDNSHMTLEEQKAWLLEQYHKAIGS.

Position 10–18 (10–18) interacts with ATP; the sequence is GHSSSGKST.

Belongs to the cytidylate kinase family. Type 1 subfamily.

Its subcellular location is the cytoplasm. It catalyses the reaction CMP + ATP = CDP + ADP. The catalysed reaction is dCMP + ATP = dCDP + ADP. This is Cytidylate kinase from Parabacteroides distasonis (strain ATCC 8503 / DSM 20701 / CIP 104284 / JCM 5825 / NCTC 11152).